The primary structure comprises 394 residues: Phenylalanine 4-monooxygenase, chloroplastic (394 aa).

The N-terminal 79 residues, 1-79 (MAMEVGYLRH…LNQIQAVSTA (79 aa)), are a transit peptide targeting the chloroplast. Residues 75-97 (AVSTAEKEREADKTSTPPIPSSI) are disordered. 3 residues coordinate Fe cation: His252, His257, and Glu297.

This sequence belongs to the biopterin-dependent aromatic amino acid hydroxylase family. In terms of assembly, forms monomers. Fe(2+) is required as a cofactor.

The protein resides in the plastid. The protein localises to the chloroplast. It catalyses the reaction (6R)-L-erythro-5,6,7,8-tetrahydrobiopterin + L-phenylalanine + O2 = (4aS,6R)-4a-hydroxy-L-erythro-5,6,7,8-tetrahydrobiopterin + L-tyrosine. Catalyzes the hydroxylation of L-phenylalanine to L-tyrosine. Does not seem to be tetrahydropterin-dependent and shows preference for 10-formyltetrahydrofolate as cosubstrate and electron donor. This is Phenylalanine 4-monooxygenase, chloroplastic from Physcomitrium patens (Spreading-leaved earth moss).